A 124-amino-acid polypeptide reads, in one-letter code: S-adenosylmethionine decarboxylase proenzyme (124 aa).

The Schiff-base intermediate with substrate; via pyruvic acid role is filled by serine 63. Pyruvic acid (Ser); by autocatalysis is present on serine 63. The active-site Proton acceptor; for processing activity is histidine 68. Cysteine 83 acts as the Proton donor; for catalytic activity in catalysis.

It belongs to the prokaryotic AdoMetDC family. Type 1 subfamily. As to quaternary structure, heterotetramer of two alpha and two beta chains arranged as a dimer of alpha/beta heterodimers. The cofactor is pyruvate. Is synthesized initially as an inactive proenzyme. Formation of the active enzyme involves a self-maturation process in which the active site pyruvoyl group is generated from an internal serine residue via an autocatalytic post-translational modification. Two non-identical subunits are generated from the proenzyme in this reaction, and the pyruvate is formed at the N-terminus of the alpha chain, which is derived from the carboxyl end of the proenzyme. The post-translation cleavage follows an unusual pathway, termed non-hydrolytic serinolysis, in which the side chain hydroxyl group of the serine supplies its oxygen atom to form the C-terminus of the beta chain, while the remainder of the serine residue undergoes an oxidative deamination to produce ammonia and the pyruvoyl group blocking the N-terminus of the alpha chain.

The catalysed reaction is S-adenosyl-L-methionine + H(+) = S-adenosyl 3-(methylsulfanyl)propylamine + CO2. The protein operates within amine and polyamine biosynthesis; S-adenosylmethioninamine biosynthesis; S-adenosylmethioninamine from S-adenosyl-L-methionine: step 1/1. In terms of biological role, catalyzes the decarboxylation of S-adenosylmethionine to S-adenosylmethioninamine (dcAdoMet), the propylamine donor required for the synthesis of the polyamines spermine and spermidine from the diamine putrescine. This chain is S-adenosylmethionine decarboxylase proenzyme, found in Caldanaerobacter subterraneus subsp. tengcongensis (strain DSM 15242 / JCM 11007 / NBRC 100824 / MB4) (Thermoanaerobacter tengcongensis).